The primary structure comprises 416 residues: Pentraxin fusion protein (416 aa).

A signal peptide spans 1–14 (MKSLLLFLKSQVFG). Residue Asn-129 is glycosylated (N-linked (GlcNAc...) asparagine). Residues 184–206 (GTEASDSSESVDGTEAPASPESD) form a disordered region. Residues 220-416 (TNKSFMFPKE…YSMIGNVAEV (197 aa)) form the Pentraxin (PTX) domain. Asn-221 carries an N-linked (GlcNAc...) asparagine glycan. Residues Cys-251 and Cys-311 are joined by a disulfide bond. The Ca(2+) site is built by Asp-275, Gln-353, Asp-354, and Gln-364.

Requires Ca(2+) as cofactor.

This chain is Pentraxin fusion protein (pxn1), found in Xenopus laevis (African clawed frog).